Consider the following 175-residue polypeptide: Disulfide bond formation protein B 2 (175 aa).

At 1–9 (MYLARTRFL) the chain is on the cytoplasmic side. A helical membrane pass occupies residues 10 to 26 (FFLASLACASIIGVAFY). Residues 27-44 (LQQAVGLDPCTLCMVQRA) are Periplasmic-facing. Cys-36 and Cys-39 are oxidised to a cystine. A helical transmembrane segment spans residues 45 to 61 (AFIACGVLALCAACHAP). Residues 62–68 (GPTGTRR) are Cytoplasmic-facing. The chain crosses the membrane as a helical span at residues 69–85 (YSLGLLLVALAGLAGAG). The Periplasmic segment spans residues 86–142 (TQVWLQTASADQLIPFITRLEQILSLLSLDMCIDRLRSDALFCAEITWTLFGISLPE). Residues 143–161 (WSLLAFTGLALLPLYPLFS) traverse the membrane as a helical segment. The Cytoplasmic segment spans residues 162–175 (ELSHWLATRDRGGY).

This sequence belongs to the DsbB family.

The protein resides in the cell inner membrane. Required for disulfide bond formation in some periplasmic proteins. Acts by oxidizing the DsbA protein. In Pseudomonas syringae pv. syringae (strain B728a), this protein is Disulfide bond formation protein B 2.